Reading from the N-terminus, the 610-residue chain is Putative sensor histidine kinase NtrY-like (610 aa).

The next 4 membrane-spanning stretches (helical) occupy residues 18–38, 49–69, 92–112, and 292–312; these read IGILVAIAIIFSYFTYYTISI, KVIWFLLIDLIIFLVLGILLT, IVVAFSLAAAIPTIIVSISSA, and IIFIFIALLLLLIAISFGVIV. The HAMP domain maps to 314–368; sequence AKIVNPIKKLVIATDKVKSGDLTVQVPENEVDKDEIGTLYAAFNRMIKQLSRQQR. The Histidine kinase domain occupies 385 to 596; it reads KVAHEIKNPL…VIDIRFNLEE (212 aa). Position 388 is a phosphohistidine; by autocatalysis (His388).

The protein localises to the cell membrane. The catalysed reaction is ATP + protein L-histidine = ADP + protein N-phospho-L-histidine.. In terms of biological role, member of the two-component regulatory system RBE_0470/RBE_0312. The sequence is that of Putative sensor histidine kinase NtrY-like from Rickettsia bellii (strain RML369-C).